The sequence spans 204 residues: Ras-related protein Rab-7L1 (204 aa).

GTP is bound by residues Ser-33, Lys-34, His-35, Tyr-36, Lys-37, and Thr-39. The short motif at 36–44 is the Effector region element; that stretch reads YKSTVGVDF. Thr-71 is modified (phosphothreonine; by LRRK2). A Phosphoserine modification is found at Ser-72. GTP-binding residues include Lys-126, Val-156, and Lys-157. S-geranylgeranyl cysteine attachment occurs at residues Cys-203 and Cys-204.

It belongs to the small GTPase superfamily. Rab family. As to quaternary structure, interacts with LRRK2 (via the N-terminus); this interaction is direct and stimulates kinase activity. In terms of tissue distribution, expressed predominantly in kidney and much less in brain, heart, muscle, fat, liver, spleen, adrenal gland, ovary, thymus and lung. Not expressed in testis and intestine.

The protein resides in the cell membrane. It is found in the cytoplasm. The protein localises to the perinuclear region. Its subcellular location is the golgi apparatus. It localises to the golgi apparatus membrane. The protein resides in the trans-Golgi network. It is found in the cytoskeleton. In terms of biological role, the small GTPases Rab are key regulators in vesicle trafficking. Essential for maintaining the integrity of endosome-trans-Golgi network structure. Together with LRRK2, plays a role in the retrograde trafficking pathway for recycling proteins, such as mannose 6 phosphate receptor (M6PR), between lysosomes and the Golgi apparatus in a retromer-dependent manner. Recruits LRRK2 to the Golgi apparatus and stimulates LRRK2 kinase activity. Stimulates phosphorylation of RAB10 'Thr-73' by LRRK2. Regulates also neuronal process morphology in the intact central nervous system (CNS). This Rattus norvegicus (Rat) protein is Ras-related protein Rab-7L1 (Rab29).